The sequence spans 540 residues: Glucose-6-phosphate isomerase (540 aa).

Catalysis depends on Glu-351, which acts as the Proton donor. Catalysis depends on residues His-382 and Lys-506.

The protein belongs to the GPI family.

It localises to the cytoplasm. The enzyme catalyses alpha-D-glucose 6-phosphate = beta-D-fructose 6-phosphate. It functions in the pathway carbohydrate biosynthesis; gluconeogenesis. The protein operates within carbohydrate degradation; glycolysis; D-glyceraldehyde 3-phosphate and glycerone phosphate from D-glucose: step 2/4. In terms of biological role, catalyzes the reversible isomerization of glucose-6-phosphate to fructose-6-phosphate. The sequence is that of Glucose-6-phosphate isomerase from Corynebacterium glutamicum (strain R).